The following is a 47-amino-acid chain: Large ribosomal subunit protein bL33 (47 aa).

It belongs to the bacterial ribosomal protein bL33 family.

The chain is Large ribosomal subunit protein bL33 from Staphylococcus saprophyticus.